The sequence spans 722 residues: Zinc finger BED domain-containing protein RICESLEEPER 2 (722 aa).

The BED-type zinc-finger motif lies at 66–134 (RKKSLVWEHF…QEHKLALTPA (69 aa)). Residues Cys-89, Cys-92, His-113, and His-127 each contribute to the Zn(2+) site. The tract at residues 572–592 (VEQGDGNNAPASENGTQATAP) is disordered. Polar residues predominate over residues 576 to 592 (DGNNAPASENGTQATAP). The tract at residues 617–702 (ELEQYLDESL…EALVCAKDWL (86 aa)) is HATC (Hobo-Ac-Tam3) domain.

As to quaternary structure, homodimer.

It is found in the nucleus. Transposase-like protein that is essential for plant growth and development. May regulate global gene expression by recruiting other cellular factors. This chain is Zinc finger BED domain-containing protein RICESLEEPER 2, found in Oryza sativa subsp. japonica (Rice).